A 187-amino-acid chain; its full sequence is Dihydrofolate reductase (187 aa).

The region spanning Pro-4–Lys-185 is the DHFR domain. NADP(+) contacts are provided by residues Ala-10 and Gly-16–Asp-22. Substrate is bound at residue Glu-31–Gln-36. Arg-55–Thr-57 contacts NADP(+). Arg-71 lines the substrate pocket. NADP(+) is bound by residues Ser-77–Glu-79 and Gly-117–Glu-124.

This sequence belongs to the dihydrofolate reductase family. In terms of assembly, homodimer.

The protein localises to the mitochondrion. It localises to the cytoplasm. The catalysed reaction is (6S)-5,6,7,8-tetrahydrofolate + NADP(+) = 7,8-dihydrofolate + NADPH + H(+). It functions in the pathway cofactor biosynthesis; tetrahydrofolate biosynthesis; 5,6,7,8-tetrahydrofolate from 7,8-dihydrofolate: step 1/1. Functionally, key enzyme in folate metabolism. Contributes to the de novo mitochondrial thymidylate biosynthesis pathway. Catalyzes an essential reaction for de novo glycine and purine synthesis, and for DNA precursor synthesis. Binds its own mRNA and that of DHFR2. The chain is Dihydrofolate reductase (DHFR) from Bos taurus (Bovine).